A 38-amino-acid chain; its full sequence is Photosystem I reaction center subunit VIII (38 aa).

Residues 12–32 (WILIPIIGWLMPAVVMGLLFL) form a helical membrane-spanning segment.

The protein belongs to the PsaI family.

The protein localises to the cellular thylakoid membrane. May help in the organization of the PsaL subunit. The chain is Photosystem I reaction center subunit VIII from Gloeothece citriformis (strain PCC 7424) (Cyanothece sp. (strain PCC 7424)).